The primary structure comprises 100 residues: Integration host factor subunit alpha (100 aa).

The segment at 53 to 72 (FDLRDKRQRPGRNPKTGEEI) is disordered.

This sequence belongs to the bacterial histone-like protein family. In terms of assembly, heterodimer of an alpha and a beta chain.

In terms of biological role, this protein is one of the two subunits of integration host factor, a specific DNA-binding protein that functions in genetic recombination as well as in transcriptional and translational control. In Pseudomonas entomophila (strain L48), this protein is Integration host factor subunit alpha.